Reading from the N-terminus, the 179-residue chain is Acireductone dioxygenase (179 aa).

Fe(2+) contacts are provided by H88, H90, E94, and H133. 4 residues coordinate Ni(2+): H88, H90, E94, and H133.

It belongs to the acireductone dioxygenase (ARD) family. In terms of assembly, monomer. Interacts with MMP14. It depends on Fe(2+) as a cofactor. Ni(2+) is required as a cofactor.

It localises to the cytoplasm. Its subcellular location is the nucleus. It is found in the cell membrane. The catalysed reaction is 1,2-dihydroxy-5-(methylsulfanyl)pent-1-en-3-one + O2 = 4-methylsulfanyl-2-oxobutanoate + formate + 2 H(+). The enzyme catalyses 1,2-dihydroxy-5-(methylsulfanyl)pent-1-en-3-one + O2 = 3-(methylsulfanyl)propanoate + CO + formate + 2 H(+). The protein operates within amino-acid biosynthesis; L-methionine biosynthesis via salvage pathway; L-methionine from S-methyl-5-thio-alpha-D-ribose 1-phosphate: step 5/6. In terms of biological role, catalyzes 2 different reactions between oxygen and the acireductone 1,2-dihydroxy-3-keto-5-methylthiopentene (DHK-MTPene) depending upon the metal bound in the active site. Fe-containing acireductone dioxygenase (Fe-ARD) produces formate and 2-keto-4-methylthiobutyrate (KMTB), the alpha-ketoacid precursor of methionine in the methionine recycle pathway. Ni-containing acireductone dioxygenase (Ni-ARD) produces methylthiopropionate, carbon monoxide and formate, and does not lie on the methionine recycle pathway. The sequence is that of Acireductone dioxygenase (adi1) from Xenopus laevis (African clawed frog).